Here is a 297-residue protein sequence, read N- to C-terminus: Phosphoribosylaminoimidazole-succinocarboxamide synthase (297 aa).

This sequence belongs to the SAICAR synthetase family.

The catalysed reaction is 5-amino-1-(5-phospho-D-ribosyl)imidazole-4-carboxylate + L-aspartate + ATP = (2S)-2-[5-amino-1-(5-phospho-beta-D-ribosyl)imidazole-4-carboxamido]succinate + ADP + phosphate + 2 H(+). It functions in the pathway purine metabolism; IMP biosynthesis via de novo pathway; 5-amino-1-(5-phospho-D-ribosyl)imidazole-4-carboxamide from 5-amino-1-(5-phospho-D-ribosyl)imidazole-4-carboxylate: step 1/2. This Mycobacterium marinum (strain ATCC BAA-535 / M) protein is Phosphoribosylaminoimidazole-succinocarboxamide synthase.